Here is a 518-residue protein sequence, read N- to C-terminus: Transcription factor TT8 (518 aa).

Coiled-coil stretches lie at residues 220–240 (EVHE…MSEE) and 405–428 (VNHL…KRTR). The bHLH domain occupies 359–408 (REDLSHVVAERRRREKLNEKFITLRSMVPFVTKMDKVSILGDTIAYVNHL).

This sequence belongs to the bHLH protein family. As to quaternary structure, homodimer. Interacts with MYB4, MYB5, MYB6, MYB82, MYB113, MYB114, MYB75/PAP1, MYB90/PAP2, and TT2. Buds, flowers and developing siliques, but not in leaves, stems and roots.

Its subcellular location is the nucleus. Transcription activator, when associated with MYB75/PAP1 or MYB90/PAP2. Involved in the control of flavonoid pigmentation. Plays a key role in regulating leucoanthocyanidin reductase (BANYULS) and dihydroflavonol-4-reductase (DFR). Not required for leucoanthocyanidin dioxygenase (LDOX) expression. This Arabidopsis thaliana (Mouse-ear cress) protein is Transcription factor TT8.